We begin with the raw amino-acid sequence, 130 residues long: Chaperone protein SycT (130 aa).

In terms of assembly, binds to YopT.

Functionally, functions as a specific chaperone for YopT. The polypeptide is Chaperone protein SycT (sycT) (Yersinia enterocolitica serotype O:8 / biotype 1B (strain NCTC 13174 / 8081)).